A 256-amino-acid chain; its full sequence is Major prion protein (256 aa).

The first 24 residues, methionine 1 to cysteine 24, serve as a signal peptide directing secretion. The interaction with GRB2, ERI3 and SYN1 stretch occupies residues lysine 25–alanine 233. Residues proline 28 to threonine 110 are disordered. 5 repeat units span residues proline 54–glutamine 62, proline 63–glutamine 70, proline 71–glutamine 78, proline 79–glutamine 86, and proline 87–glutamine 95. The interval proline 54 to glutamine 95 is 5 X 8 AA tandem repeats of P-H-G-G-G-W-G-Q. The span at glycine 56 to glycine 97 shows a compositional bias: gly residues. Positions 64, 65, 66, 72, 73, 74, 80, 81, 82, 88, 90, and 91 each coordinate Cu(2+). Cysteine 182 and cysteine 217 form a disulfide bridge. Asparagine 184 and asparagine 200 each carry an N-linked (GlcNAc...) asparagine glycan. The GPI-anchor amidated alanine moiety is linked to residue alanine 233. Residues serine 234–glycine 256 constitute a propeptide, removed in mature form.

Belongs to the prion family. As to quaternary structure, monomer and homodimer. Has a tendency to aggregate into amyloid fibrils containing a cross-beta spine, formed by a steric zipper of superposed beta-strands. Soluble oligomers may represent an intermediate stage on the path to fibril formation. Copper binding may promote oligomerization. Interacts with GRB2, APP, ERI3/PRNPIP and SYN1. Mislocalized cytosolically exposed PrP interacts with MGRN1; this interaction alters MGRN1 subcellular location and causes lysosomal enlargement. Interacts with KIAA1191.

It localises to the cell membrane. Its subcellular location is the golgi apparatus. In terms of biological role, its primary physiological function is unclear. Has cytoprotective activity against internal or environmental stresses. May play a role in neuronal development and synaptic plasticity. May be required for neuronal myelin sheath maintenance. May play a role in iron uptake and iron homeostasis. Soluble oligomers are toxic to cultured neuroblastoma cells and induce apoptosis (in vitro). Association with GPC1 (via its heparan sulfate chains) targets PRNP to lipid rafts. Also provides Cu(2+) or Zn(2+) for the ascorbate-mediated GPC1 deaminase degradation of its heparan sulfate side chains. In Moschus chrysogaster (Alpine musk deer), this protein is Major prion protein (PRNP).